The chain runs to 180 residues: MTLKELVVGFGTQVRSLWMIGLHAFHKRETQMYPEEPVYLPPRYRGRIVLTRDPDGEERCVACNLCAVACPVGCISLQKAEHKDGRWYPEFFRINFSRCIFCGLCEEACPTTAIQLTPDFEMGEFKRQDLVYEKEDLLISGPGKYPEYNFYRMSGMAIDGKLKGEAENEAKPIDVKGLMP.

2 consecutive 4Fe-4S ferredoxin-type domains span residues 50-80 (LTRD…LQKA) and 90-119 (EFFR…LTPD). 8 residues coordinate [4Fe-4S] cluster: C60, C63, C66, C70, C99, C102, C105, and C109.

It belongs to the complex I 23 kDa subunit family. NDH-1 is composed of 13 different subunits. Subunits NuoA, H, J, K, L, M, N constitute the membrane sector of the complex. [4Fe-4S] cluster is required as a cofactor.

Its subcellular location is the cell inner membrane. The enzyme catalyses a quinone + NADH + 5 H(+)(in) = a quinol + NAD(+) + 4 H(+)(out). In terms of biological role, NDH-1 shuttles electrons from NADH, via FMN and iron-sulfur (Fe-S) centers, to quinones in the respiratory chain. The immediate electron acceptor for the enzyme in this species is believed to be ubiquinone. Couples the redox reaction to proton translocation (for every two electrons transferred, four hydrogen ions are translocated across the cytoplasmic membrane), and thus conserves the redox energy in a proton gradient. The sequence is that of NADH-quinone oxidoreductase subunit I from Yersinia enterocolitica serotype O:8 / biotype 1B (strain NCTC 13174 / 8081).